The chain runs to 238 residues: Inactive glycoside hydrolase XLP1 (238 aa).

Residues 1–19 (MKSFLIAIVIAVLLPVSAA) form the signal peptide. Glu-133 is a catalytic residue. N-linked (GlcNAc...) asparagine glycosylation is found at Asn-171 and Asn-187. Glu-219 is an active-site residue.

It belongs to the glycosyl hydrolase 12 (cellulase H) family. Interacts with host apoplastic glucanase inhibitor GIP2.

Its subcellular location is the secreted. Functionally, non-functional secreted XEG1-like protein that binds to host Nicotiana benthamiana apoplastic glucanase inhibitor protein GIP2 more tightly than does XEG1, thus it outcompetes XEG1 for GIP2 binding and frees functional XEG1 to support P.parasitica infection. With XEG1, is required to elevate apoplastic sugar during P.parasitica infection. This chain is Inactive glycoside hydrolase XLP1, found in Phytophthora nicotianae (strain INRA-310) (Phytophthora parasitica).